Reading from the N-terminus, the 232-residue chain is Cytidylate kinase (232 aa).

19–27 (GPAGVGKTT) contacts ATP.

It belongs to the cytidylate kinase family. Type 1 subfamily.

Its subcellular location is the cytoplasm. It carries out the reaction CMP + ATP = CDP + ADP. It catalyses the reaction dCMP + ATP = dCDP + ADP. In Nitratidesulfovibrio vulgaris (strain DP4) (Desulfovibrio vulgaris), this protein is Cytidylate kinase.